We begin with the raw amino-acid sequence, 94 residues long: Small ribosomal subunit protein bS18 (94 aa).

It belongs to the bacterial ribosomal protein bS18 family. In terms of assembly, part of the 30S ribosomal subunit. Forms a tight heterodimer with protein bS6.

In terms of biological role, binds as a heterodimer with protein bS6 to the central domain of the 16S rRNA, where it helps stabilize the platform of the 30S subunit. The chain is Small ribosomal subunit protein bS18 from Rickettsia bellii (strain OSU 85-389).